We begin with the raw amino-acid sequence, 470 residues long: Neuraminidase (470 aa).

Residues 1–14 (MNPNQKIITIGSIS) lie on the Intravirion side of the membrane. Residues 11-32 (GSISLGLVVFNVLLHVVSIIVT) are involved in apical transport and lipid raft association. The helical transmembrane segment at 15–35 (LGLVVFNVLLHVVSIIVTVLI) threads the bilayer. The interval 32 to 86 (TVLILGRGGNNGICNETVVREYNETVRIEKVTQWHNTSVVEYMPYWNEGTYMNNT) is hypervariable stalk region. The Virion surface portion of the chain corresponds to 36–470 (LGRGGNNGIC…AILPFDIDKM (435 aa)). Residues asparagine 46, asparagine 54, asparagine 67, and asparagine 84 are each glycosylated (N-linked (GlcNAc...) asparagine; by host). Positions 89–470 (ICDVKGFAPF…AILPFDIDKM (382 aa)) are head of neuraminidase. Intrachain disulfides connect cysteine 90–cysteine 417, cysteine 122–cysteine 127, cysteine 182–cysteine 229, cysteine 231–cysteine 236, cysteine 277–cysteine 290, cysteine 279–cysteine 288, cysteine 316–cysteine 335, and cysteine 421–cysteine 446. Arginine 116 is a substrate binding site. Asparagine 144 is a glycosylation site (N-linked (GlcNAc...) asparagine; by host). The active-site Proton donor/acceptor is the aspartate 149. Arginine 150 contacts substrate. 275–276 (EE) provides a ligand contact to substrate. Arginine 291 is a binding site for substrate. Aspartate 292 contacts Ca(2+). N-linked (GlcNAc...) asparagine; by host glycosylation is present at asparagine 293. Ca(2+) is bound by residues glycine 296 and aspartate 322. Arginine 368 lines the substrate pocket. Asparagine 398 carries N-linked (GlcNAc...) asparagine; by host glycosylation. The active-site Nucleophile is tyrosine 402.

This sequence belongs to the glycosyl hydrolase 34 family. Homotetramer. Requires Ca(2+) as cofactor. N-glycosylated.

It localises to the virion membrane. The protein localises to the host apical cell membrane. The catalysed reaction is Hydrolysis of alpha-(2-&gt;3)-, alpha-(2-&gt;6)-, alpha-(2-&gt;8)- glycosidic linkages of terminal sialic acid residues in oligosaccharides, glycoproteins, glycolipids, colominic acid and synthetic substrates.. With respect to regulation, inhibited by the neuraminidase inhibitors zanamivir (Relenza) and oseltamivir (Tamiflu). These drugs interfere with the release of progeny virus from infected cells and are effective against all influenza strains. Resistance to neuraminidase inhibitors is quite rare. Catalyzes the removal of terminal sialic acid residues from viral and cellular glycoconjugates. Cleaves off the terminal sialic acids on the glycosylated HA during virus budding to facilitate virus release. Additionally helps virus spread through the circulation by further removing sialic acids from the cell surface. These cleavages prevent self-aggregation and ensure the efficient spread of the progeny virus from cell to cell. Otherwise, infection would be limited to one round of replication. Described as a receptor-destroying enzyme because it cleaves a terminal sialic acid from the cellular receptors. May facilitate viral invasion of the upper airways by cleaving the sialic acid moieties on the mucin of the airway epithelial cells. Likely to plays a role in the budding process through its association with lipid rafts during intracellular transport. May additionally display a raft-association independent effect on budding. Plays a role in the determination of host range restriction on replication and virulence. Sialidase activity in late endosome/lysosome traffic seems to enhance virus replication. The sequence is that of Neuraminidase from Aves (Horse).